A 341-amino-acid chain; its full sequence is MSGKIKIGINGFGRIGRLVMRATMLRPDIEVVAINDPFIDAEYMAYMFKYDSVHKTWPGHVNGSKDGFLVEGRKIHTFTESDPSKINWGAAGADIVIESTGVFTDIAKATAHLTGGAKKVIITAPSNDAPMYVMGVNHEKYNPATDHIISNASCTTNCLAPLAKVVNSKFGIKEGLMTTVHATTATQKTVDGPSKKDWRGGRAVNGNIIPSSTGAAKAVGKVLPELKGKLTGMAFRVPTNDVSVVDLTVTLEKATTYEDIMKALKEASEGEMKGVLAYTDEDVVSSDFVTDPASCTVDAKAGIMLSPTFVKLVAWYDNEWGYSNRVVDLALHVAKKAAVKV.

NAD(+)-binding positions include 14–15 (RI) and aspartate 36. Residues 153–155 (SCT), threonine 184, 213–214 (TG), and arginine 236 contribute to the D-glyceraldehyde 3-phosphate site. The Nucleophile role is filled by cysteine 154. Asparagine 318 serves as a coordination point for NAD(+).

This sequence belongs to the glyceraldehyde-3-phosphate dehydrogenase family. In terms of assembly, homotetramer.

It localises to the cytoplasm. It carries out the reaction D-glyceraldehyde 3-phosphate + phosphate + NAD(+) = (2R)-3-phospho-glyceroyl phosphate + NADH + H(+). It participates in carbohydrate degradation; glycolysis; pyruvate from D-glyceraldehyde 3-phosphate: step 1/5. Its function is as follows. Key enzyme in glycolysis that catalyzes the first step of the pathway by converting D-glyceraldehyde 3-phosphate (G3P) into 3-phospho-D-glyceroyl phosphate. Essential for the maintenance of cellular ATP levels and carbohydrate metabolism. The protein is Glyceraldehyde-3-phosphate dehydrogenase, cytosolic (GAPC) of Chlamydomonas reinhardtii (Chlamydomonas smithii).